The following is a 395-amino-acid chain: MENGTGDEQNHTGLLLSSQEFVTAEYQVVTILLVLLICGLGIVGNIMVVLVVLRTKHMRTPTNCYLVSLAVADLMVLVAAGLPNITESLYKSWVYGYVGCLCITYLQYLGINASSFSITAFTIERYIAICHPIKAQFLCTFSRAKKIIIFVWSFASVYCMLWFFLLDLNIAVYKDTTVVSCGYKVSRSYYSPIYMMDFGIFYVLPMVLATVLYGLIARILFLNPIPSDPKENSNTWKNDMAQQNKTVNSKMTNKSFNSTIASRRQVTKMLAVVVVLFAFLWMPYRTLVVVNSFLSSPFQENWFLLFCRICIYLNSAINPVIYNLMSQKFRAAFRKLCNCHLKRDKKPANYSVALNYNVIKESDHFSSEIEDITVTNTYLSSAKTSIGDTCLSSEA.

Residues Met-1 to Thr-30 are Extracellular-facing. N-linked (GlcNAc...) asparagine glycosylation is found at Asn-3 and Asn-10. A helical membrane pass occupies residues Ile-31–Leu-53. Topologically, residues Arg-54–Asn-63 are cytoplasmic. Residues Cys-64–Ile-85 form a helical membrane-spanning segment. Residues Thr-86–Leu-101 lie on the Extracellular side of the membrane. Residues Cys-100 and Cys-181 are joined by a disulfide bond. Residues Cys-102–Ile-123 form a helical membrane-spanning segment. Over Glu-124 to Lys-146 the chain is Cytoplasmic. The helical transmembrane segment at Ile-147–Ile-170 threads the bilayer. The Extracellular portion of the chain corresponds to Ala-171 to Met-195. Residues Met-196 to Ala-217 form a helical membrane-spanning segment. At Arg-218–Lys-268 the chain is on the cytoplasmic side. A helical membrane pass occupies residues Met-269–Val-290. The Extracellular segment spans residues Asn-291–Phe-298. The helical transmembrane segment at Gln-299–Ile-321 threads the bilayer. At Tyr-322–Ala-395 the chain is on the cytoplasmic side.

Belongs to the G-protein coupled receptor 1 family.

Its subcellular location is the cell membrane. In terms of biological role, receptor for thyrotropin-releasing hormone (TRH). Upon ligand binding, this G-protein-coupled receptor triggers activation of the phosphatidylinositol (IP3)-calcium-protein kinase C (PKC) pathway. This chain is Thyrotropin-releasing hormone receptor (TRHR), found in Gallus gallus (Chicken).